We begin with the raw amino-acid sequence, 40 residues long: uncharacterized protein (40 aa).

This is an uncharacterized protein from Myxococcus xanthus (strain DK1622).